Reading from the N-terminus, the 281-residue chain is 2,3,4,5-tetrahydropyridine-2,6-dicarboxylate N-succinyltransferase (281 aa).

It belongs to the transferase hexapeptide repeat family.

Its subcellular location is the cytoplasm. It catalyses the reaction (S)-2,3,4,5-tetrahydrodipicolinate + succinyl-CoA + H2O = (S)-2-succinylamino-6-oxoheptanedioate + CoA. It participates in amino-acid biosynthesis; L-lysine biosynthesis via DAP pathway; LL-2,6-diaminopimelate from (S)-tetrahydrodipicolinate (succinylase route): step 1/3. The protein is 2,3,4,5-tetrahydropyridine-2,6-dicarboxylate N-succinyltransferase of Afipia carboxidovorans (strain ATCC 49405 / DSM 1227 / KCTC 32145 / OM5) (Oligotropha carboxidovorans).